A 318-amino-acid polypeptide reads, in one-letter code: Thymidylate synthase (318 aa).

DUMP contacts are provided by residues Arg25 and 180–181 (RR). Cys200 (nucleophile) is an active-site residue. Residues 220–223 (RSGD), Asn231, and 261–263 (HIY) contribute to the dUMP site. Residue Asp223 participates in (6R)-5,10-methylene-5,6,7,8-tetrahydrofolate binding. Position 317 (Ala317) interacts with (6R)-5,10-methylene-5,6,7,8-tetrahydrofolate.

It belongs to the thymidylate synthase family. Bacterial-type ThyA subfamily. As to quaternary structure, homodimer.

It localises to the cytoplasm. It catalyses the reaction dUMP + (6R)-5,10-methylene-5,6,7,8-tetrahydrofolate = 7,8-dihydrofolate + dTMP. The protein operates within pyrimidine metabolism; dTTP biosynthesis. Catalyzes the reductive methylation of 2'-deoxyuridine-5'-monophosphate (dUMP) to 2'-deoxythymidine-5'-monophosphate (dTMP) while utilizing 5,10-methylenetetrahydrofolate (mTHF) as the methyl donor and reductant in the reaction, yielding dihydrofolate (DHF) as a by-product. This enzymatic reaction provides an intracellular de novo source of dTMP, an essential precursor for DNA biosynthesis. The protein is Thymidylate synthase of Lactobacillus johnsonii (strain CNCM I-12250 / La1 / NCC 533).